Consider the following 369-residue polypeptide: Nuclear pore complex-interacting protein family member A2 (369 aa).

The segment at 325-346 is disordered; the sequence is KTPPECLLTPLPPSAPPSADDN.

Belongs to the NPIP family.

The chain is Nuclear pore complex-interacting protein family member A2 (NPIPA2) from Homo sapiens (Human).